The primary structure comprises 496 residues: MAKLLALSLSFCFLLFGTCFALRDQPQQNECQLEHLNALKPDNRIKSEGGLIETWNPSNKQFACAGVALSRATLQPNSLLQTFLHQRSPEIFIQQGNGYFGMVFPGCVETFEEPRESEQGEGSKFSDSHQKVNRFREGDIIAVPTGVVFWMFNDQDTPVIAVSLIDTSSFQNQLDQMPRRFYLAGNHEQEFLRYQQEGSEEEENEGGNIFSGFKRDFLEDALNVNRRIVNKLQGRNEDEEKGAIVKVKGGLSITTPPEKEPRQKRGSRQEEDEDEDEKRQPHRHSRQDEDEDEKRQPHHHSRGGSKSQRDNGFEETICTARLHQNIGSSSSPDIYNPQAGRIKTVTSFDLQALRFLKLSAEFGSLHKNAMFVPHYNLNANSILYALKGRARLLYALNCKGNSVFDGELEAGRALIVPQNFAIAAKSLSDRFSYVAFKTNDRALINVCQKKLLQLLSIWKEMRPGSSSSTAPFHFLFHPAVTQTTKQQLDLVPNQYE.

The signal sequence occupies residues 1–21 (MAKLLALSLSFCFLLFGTCFA). 2 disulfide bridges follow: Cys31–Cys64 and Cys107–Cys318. One can recognise a Cupin type-1 1 domain in the interval 36-230 (LNALKPDNRI…ALNVNRRIVN (195 aa)). A disordered region spans residues 240–311 (EKGAIVKVKG…RGGSKSQRDN (72 aa)). Residues 257 to 269 (PEKEPRQKRGSRQ) show a composition bias toward basic and acidic residues. The 130-residue stretch at 324 to 453 (QNIGSSSSPD…INVCQKKLLQ (130 aa)) folds into the Cupin type-1 2 domain.

This sequence belongs to the 11S seed storage protein (globulins) family. In terms of assembly, hexamer; each subunit is composed of an acidic and a basic chain derived from a single precursor and linked by a disulfide bond.

Its function is as follows. Seed storage protein. Alpha-amylase inhibitor. The polypeptide is Legumin (Cicer arietinum (Chickpea)).